We begin with the raw amino-acid sequence, 831 residues long: Zinc transporter ZIP10 (831 aa).

A signal peptide spans 1-25; the sequence is MKVHMHTKFCLICLLTFIFHHCNHC. Positions 126-318 are disordered; that stretch reads HNHQHSHNHL…RKREAPHVKN (193 aa). Positions 138 to 147 are enriched in polar residues; it reads ENQTVTSVST. The N-linked (GlcNAc...) asparagine glycan is linked to Asn-139. Residues 152–171 are compositionally biased toward basic and acidic residues; sequence KCDPEKETVEVSVKSDDKHM. Positions 172–188 are enriched in basic residues; sequence HDHNHRLRHHHRLHHHL. The segment covering 189-198 has biased composition (basic and acidic residues); the sequence is DHNNTHHFHN. N-linked (GlcNAc...) asparagine glycans are attached at residues Asn-198 and Asn-218. Residues 211-221 are compositionally biased toward polar residues; it reads NEPSTETNKTQ. The segment covering 229-238 has biased composition (basic residues); that stretch reads PKGKRKKKGR. 2 stretches are compositionally biased toward basic and acidic residues: residues 256–273 and 281–315; these read DQGE…DRVH and HLPE…EAPH. A glycan (N-linked (GlcNAc...) asparagine) is linked at Asn-339. Transmembrane regions (helical) follow at residues 411–431 and 438–458; these read IISI…VPII and FLLT…ALLH. The tract at residues 464–484 is disordered; the sequence is QGGHDHSHQHAHGHGHSHGHE. The helical transmembrane segment at 495–515 threads the bilayer; the sequence is VLKGLVALGGIYLLFIIEHCI. A phosphothreonine mark is found at Thr-536 and Thr-553. Phosphoserine is present on Ser-591. Transmembrane regions (helical) follow at residues 687–707, 732–752, 759–779, and 801–821; these read AIGA…IAVF, IVYN…GTAV, ITLW…LVDM, and FILQ…IALY.

Belongs to the ZIP transporter (TC 2.A.5) family. Interacts with SLC39A6; which triggers cells to undergo EMT and mitosis. Found in a complex with SLC39A6, SLC39A10 and with the 'Ser-727' phosphorylated form of STAT3 throughout mitosis. Found in a complex with SLC39A6, SLC39A10 and with NCAM1; this complex controls NCAM1 phosphorylation and integration into focal adhesion complexes during epithelial-tomesenchymal transition. Found in a complex with SLC39A6, SLC39A10 and with GSK3B that controls NCAM1 phosphorylation. Post-translationally, undergoes N-terminal ectodomain shedding.

It localises to the cell membrane. It is found in the apical cell membrane. It catalyses the reaction Zn(2+)(in) = Zn(2+)(out). Functionally, zinc-influx transporter. When associated with SLC39A6, the heterodimer formed by SLC39A10 and SLC39A6 mediates cellular zinc uptake to trigger cells to undergo epithelial-to-mesenchymal transition (EMT). SLC39A10-SLC39A6 heterodimers play also an essentiel role in initiating mitosis by importing zinc into cells to initiate a pathway resulting in the onset of mitosis. Plays an important for both mature B-cell maintenance and humoral immune responses. When associated with SLC39A10, the heterodimer controls NCAM1 phosphorylation and integration into focal adhesion complexes during EMT. The sequence is that of Zinc transporter ZIP10 from Homo sapiens (Human).